A 443-amino-acid polypeptide reads, in one-letter code: ATP-dependent protease ATPase subunit HslU (443 aa).

ATP is bound by residues Val-18 and 60–65 (GVGKTE). The tract at residues 139–160 (AKNNWGQPEESGEPSSARQNFR) is disordered. The ATP site is built by Asp-256, Glu-321, and Arg-393.

Belongs to the ClpX chaperone family. HslU subfamily. A double ring-shaped homohexamer of HslV is capped on each side by a ring-shaped HslU homohexamer. The assembly of the HslU/HslV complex is dependent on binding of ATP.

The protein localises to the cytoplasm. In terms of biological role, ATPase subunit of a proteasome-like degradation complex; this subunit has chaperone activity. The binding of ATP and its subsequent hydrolysis by HslU are essential for unfolding of protein substrates subsequently hydrolyzed by HslV. HslU recognizes the N-terminal part of its protein substrates and unfolds these before they are guided to HslV for hydrolysis. The sequence is that of ATP-dependent protease ATPase subunit HslU from Sodalis glossinidius (strain morsitans).